A 362-amino-acid chain; its full sequence is Phosphoserine aminotransferase (362 aa).

L-glutamate is bound by residues S9 and R42. Residues 76 to 77, W102, T153, D174, and Q197 each bind pyridoxal 5'-phosphate; that span reads GR. An N6-(pyridoxal phosphate)lysine modification is found at K198. A pyridoxal 5'-phosphate-binding site is contributed by 239–240; that stretch reads NT.

Belongs to the class-V pyridoxal-phosphate-dependent aminotransferase family. SerC subfamily. As to quaternary structure, homodimer. It depends on pyridoxal 5'-phosphate as a cofactor.

It localises to the cytoplasm. The catalysed reaction is O-phospho-L-serine + 2-oxoglutarate = 3-phosphooxypyruvate + L-glutamate. It carries out the reaction 4-(phosphooxy)-L-threonine + 2-oxoglutarate = (R)-3-hydroxy-2-oxo-4-phosphooxybutanoate + L-glutamate. It functions in the pathway amino-acid biosynthesis; L-serine biosynthesis; L-serine from 3-phospho-D-glycerate: step 2/3. It participates in cofactor biosynthesis; pyridoxine 5'-phosphate biosynthesis; pyridoxine 5'-phosphate from D-erythrose 4-phosphate: step 3/5. Catalyzes the reversible conversion of 3-phosphohydroxypyruvate to phosphoserine and of 3-hydroxy-2-oxo-4-phosphonooxybutanoate to phosphohydroxythreonine. The polypeptide is Phosphoserine aminotransferase (Escherichia coli O7:K1 (strain IAI39 / ExPEC)).